A 594-amino-acid chain; its full sequence is Zinc finger protein 467 (594 aa).

Positions 1-70 (MRETLEALNS…HTEQAEAPCM (70 aa)) are disordered. Lysine 97 participates in a covalent cross-link: Glycyl lysine isopeptide (Lys-Gly) (interchain with G-Cter in SUMO2). C2H2-type zinc fingers lie at residues 160-182 (YGCEECERRFRDQLTLRLHQRLH), 188-210 (CACPDCGRSFTQRAHMLLHQRSH), 216-238 (FPCSECDKRFSKKAHLTRHLRTH), 244-266 (YPCAECGKRFSQKIHLGSHQKTH), 272-294 (FPCTECEKRFRKKTHLIRHQRIH), 300-322 (YQCTQCTRSFTHKQHLVRHQRVH), 355-377 (FACSHCGQSFGWKKNLATHQSLH), 430-452 (FFCPDCGRGFAHGQHLARHRRVH), 458-480 (FACAQCGRRFGSRPNLVAHSRAH), 486-508 (FACAQCGRRFSRKSHLGRHQAVH), 514-536 (HACAVCARCFSSKTNLVRHQAIH), and 542-564 (FSCPQCAKSFSRKTHLVRHQRIH). A disordered region spans residues 313 to 350 (QHLVRHQRVHDAASRTRSSPDIPATPHPPTASLAPSPT). Residue lysine 368 forms a Glycyl lysine isopeptide (Lys-Gly) (interchain with G-Cter in SUMO2) linkage.

It belongs to the krueppel C2H2-type zinc-finger protein family. As to quaternary structure, interacts with STAT3. Enhances STAT3 activity by keeping it in the nucleus.

It is found in the nucleus. Its function is as follows. Transcription factor that promotes adipocyte differentiation and suppresses osteoblast differentiation in the bone marrow. Enhances the osteoclast-supporting ability of stromal cells. Binds with STAT3 the consensus sequence 5'-CTTCTGGGAAGA-3' of the acute phase response element (APRE). Transactivates several promoters including FOS, OSM and PPARG. Recruits a histone deacetylase complex. This is Zinc finger protein 467 (Znf467) from Rattus norvegicus (Rat).